A 530-amino-acid polypeptide reads, in one-letter code: Bifunctional purine biosynthesis protein PurH (530 aa).

The 148-residue stretch at 1 to 148 (MNNARPIRRA…KNHKDVTIVV (148 aa)) folds into the MGS-like domain.

Belongs to the PurH family.

It catalyses the reaction (6R)-10-formyltetrahydrofolate + 5-amino-1-(5-phospho-beta-D-ribosyl)imidazole-4-carboxamide = 5-formamido-1-(5-phospho-D-ribosyl)imidazole-4-carboxamide + (6S)-5,6,7,8-tetrahydrofolate. It carries out the reaction IMP + H2O = 5-formamido-1-(5-phospho-D-ribosyl)imidazole-4-carboxamide. Its pathway is purine metabolism; IMP biosynthesis via de novo pathway; 5-formamido-1-(5-phospho-D-ribosyl)imidazole-4-carboxamide from 5-amino-1-(5-phospho-D-ribosyl)imidazole-4-carboxamide (10-formyl THF route): step 1/1. It functions in the pathway purine metabolism; IMP biosynthesis via de novo pathway; IMP from 5-formamido-1-(5-phospho-D-ribosyl)imidazole-4-carboxamide: step 1/1. The sequence is that of Bifunctional purine biosynthesis protein PurH from Vibrio parahaemolyticus serotype O3:K6 (strain RIMD 2210633).